The primary structure comprises 196 residues: Chloroplastic ATP-dependent Clp protease proteolytic subunit 1 (196 aa).

The active-site Nucleophile is the Ser101. His126 is an active-site residue.

Belongs to the peptidase S14 family. In terms of assembly, component of the chloroplastic Clp protease core complex which consist of at least 16 proteins: CLPP4 (3 copies), CLPP5 (3 copies), CLPR4 (2 copies), ClpP1 (1 copy), CLPP6 (1 copy), CLPR2 (1 copy), CLPT1 (1 copy), CLPT2 (1 copy) and 3 copies of CLPP3 and/or CLPR1 and/or CLPR3. The core complex is organized in two heptameric rings, one containing CLPP3,4,5,6 in a 1:2:3:1 ratio and the other CLPP1 and CLPR1,2,3,4 in a 3:1:1:1:1 ratio. In terms of tissue distribution, mostly expressed in leaves. Also detected in stems, and to a lower extent, in roots (at protein level).

Its subcellular location is the plastid. The protein resides in the chloroplast stroma. It carries out the reaction Hydrolysis of proteins to small peptides in the presence of ATP and magnesium. alpha-casein is the usual test substrate. In the absence of ATP, only oligopeptides shorter than five residues are hydrolyzed (such as succinyl-Leu-Tyr-|-NHMec, and Leu-Tyr-Leu-|-Tyr-Trp, in which cleavage of the -Tyr-|-Leu- and -Tyr-|-Trp bonds also occurs).. Its function is as follows. Cleaves peptides in various proteins in a process that requires ATP hydrolysis. Has a chymotrypsin-like activity. Plays a major role in the degradation of misfolded proteins. The sequence is that of Chloroplastic ATP-dependent Clp protease proteolytic subunit 1 from Arabidopsis thaliana (Mouse-ear cress).